Here is a 188-residue protein sequence, read N- to C-terminus: dCTP deaminase (188 aa).

DCTP contacts are provided by residues 111–116, 135–137, Gln156, Tyr170, and Gln180; these read KSTYAR and TLE. The active-site Proton donor/acceptor is the Glu137.

It belongs to the dCTP deaminase family. In terms of assembly, homotrimer.

It carries out the reaction dCTP + H2O + H(+) = dUTP + NH4(+). It participates in pyrimidine metabolism; dUMP biosynthesis; dUMP from dCTP (dUTP route): step 1/2. Functionally, catalyzes the deamination of dCTP to dUTP. The sequence is that of dCTP deaminase from Azotobacter vinelandii (strain DJ / ATCC BAA-1303).